The chain runs to 925 residues: Alanine--tRNA ligase (925 aa).

His611, His615, Cys714, and His718 together coordinate Zn(2+).

It belongs to the class-II aminoacyl-tRNA synthetase family. Zn(2+) serves as cofactor.

Its subcellular location is the cytoplasm. It carries out the reaction tRNA(Ala) + L-alanine + ATP = L-alanyl-tRNA(Ala) + AMP + diphosphate. Functionally, catalyzes the attachment of alanine to tRNA(Ala) in a two-step reaction: alanine is first activated by ATP to form Ala-AMP and then transferred to the acceptor end of tRNA(Ala). Also edits incorrectly charged Ser-tRNA(Ala) and Gly-tRNA(Ala) via its editing domain. The protein is Alanine--tRNA ligase of Methanosarcina acetivorans (strain ATCC 35395 / DSM 2834 / JCM 12185 / C2A).